The chain runs to 83 residues: uncharacterized protein (83 aa).

A run of 2 helical transmembrane segments spans residues 23–43 (FSLW…QLIK) and 56–76 (TIFV…CVFL).

The protein resides in the cell membrane. This is an uncharacterized protein from Bacillus subtilis (strain 168).